Consider the following 439-residue polypeptide: MSYFNEIGTIQYEGAKSDNPFAFKFYNPTESINGQTMEEHLRFGVAYWHTFTEDLSDPFGNGTAIRPWDKFNGMDLAKARVEAAFEFFEKLQIPYFCFHDVDIAPEGSSLKESNENLDTVVAMIKEYMKDSKTKLLWNTVNNFTHPRFVHGAASSNNADVFAYAAAKVKKGLEVGKELGAENYVFWGGREGYETLLNTNMKLELDNLARFFHMAKDYANEIDFNAQFLIEPKPKEPTSHQYDFDVASGYAFLQNYDLQDTFKFNIEANHATLAGHTFEHELHYARIHNMLGSVDANQGHPLLGWDTDEFPSDIYTTTLAMYEILKNDGLGKGGLNFDAKVRRGSFTAEDLFHAHIAGMDSFAIGLKVAQRLMDDRVLENVVEDRYRSFNQGIGRDIVSGKTDFHQLEKHALTLSEITQPSGQLEVIKNKINQYLLTTFA.

Active-site residues include H99 and D102. Mg(2+) contacts are provided by E230, E266, H269, D294, D305, D307, and D337.

It belongs to the xylose isomerase family. In terms of assembly, homotetramer. Requires Mg(2+) as cofactor.

The protein localises to the cytoplasm. The enzyme catalyses alpha-D-xylose = alpha-D-xylulofuranose. The chain is Xylose isomerase from Oceanobacillus iheyensis (strain DSM 14371 / CIP 107618 / JCM 11309 / KCTC 3954 / HTE831).